Consider the following 175-residue polypeptide: General stress protein 14 (175 aa).

Belongs to the NAD(P)H dehydrogenase (quinone) family.

The polypeptide is General stress protein 14 (ywrO) (Bacillus subtilis (strain 168)).